Consider the following 427-residue polypeptide: MLDINYIRQSPEEVAGMLKKRRQEEDCATLDELLEYDRQRRELVQETDALKALRNKVSKDIAVIKRTGQGSAEDLIREMKEVADRIAGMDETLGEIEKQMESILLSLPNKLHPDVPEGYSAEENHICKDPVAFDHALDFPLMDHLDLGNKLGILDFERGAKISGTGFPVYIGKGARLERALLNFMLDCHTENHGYTEVFPPFMVNEDSLRGTGQWPKFADQVYYMNEDNLYAIPTAEVPVTNLHRNEMLKDEELPISYAAYSACFRREAGSYGKDTRGFLRVHQFNKIEMVKFTRPEESYDALEKILQNAEAILNALRIPYRVLLLCSGDISAGATKCYDIEVWSPAEKKYLEASSCSNFEDYQARRANIRFKPAGSSKPTYVHTLNGSGLATSRLMVSLLENYQTAEGTIVVPEVLRKYTGFDLID.

Residue 235 to 237 (TAE) participates in L-serine binding. ATP-binding positions include 266-268 (RRE) and V282. E289 is an L-serine binding site. An ATP-binding site is contributed by 353-356 (EASS). Residue S389 participates in L-serine binding.

Belongs to the class-II aminoacyl-tRNA synthetase family. Type-1 seryl-tRNA synthetase subfamily. Homodimer. The tRNA molecule binds across the dimer.

Its subcellular location is the cytoplasm. It catalyses the reaction tRNA(Ser) + L-serine + ATP = L-seryl-tRNA(Ser) + AMP + diphosphate + H(+). It carries out the reaction tRNA(Sec) + L-serine + ATP = L-seryl-tRNA(Sec) + AMP + diphosphate + H(+). It functions in the pathway aminoacyl-tRNA biosynthesis; selenocysteinyl-tRNA(Sec) biosynthesis; L-seryl-tRNA(Sec) from L-serine and tRNA(Sec): step 1/1. In terms of biological role, catalyzes the attachment of serine to tRNA(Ser). Is also able to aminoacylate tRNA(Sec) with serine, to form the misacylated tRNA L-seryl-tRNA(Sec), which will be further converted into selenocysteinyl-tRNA(Sec). The polypeptide is Serine--tRNA ligase (Chlorobium phaeobacteroides (strain BS1)).